A 477-amino-acid chain; its full sequence is Tyrosine-protein kinase transforming protein Fes (477 aa).

The disordered stretch occupies residues 49-76; the sequence is GEPPPVLLLQDDRHSTSSSEQEREGGRT. The span at 58–74 shows a compositional bias: basic and acidic residues; sequence QDDRHSTSSSEQEREGG. The 90-residue stretch at 115-204 folds into the SH2 domain; that stretch reads WYHGALPRAE…KSGIVLNRAV (90 aa). The region spanning 216-477 is the Protein kinase domain; the sequence is LVLGEQIGRG…ELQSIRKRHR (262 aa). Residues 222 to 230 and Lys-245 each bind ATP; that span reads IGRGNFGEV. Residue Asp-338 is the Proton acceptor of the active site. The residue at position 368 (Tyr-368) is a Phosphotyrosine; by autocatalysis.

The protein belongs to the protein kinase superfamily. Tyr protein kinase family. Fes/fps subfamily.

The catalysed reaction is L-tyrosyl-[protein] + ATP = O-phospho-L-tyrosyl-[protein] + ADP + H(+). This Feline sarcoma virus (strain Snyder-Theilen) protein is Tyrosine-protein kinase transforming protein Fes (V-FES).